Reading from the N-terminus, the 180-residue chain is uncharacterized protein (180 aa).

This is an uncharacterized protein from Clostridium acetobutylicum (strain ATCC 824 / DSM 792 / JCM 1419 / IAM 19013 / LMG 5710 / NBRC 13948 / NRRL B-527 / VKM B-1787 / 2291 / W).